A 91-amino-acid polypeptide reads, in one-letter code: Small ribosomal subunit protein uS19 (91 aa).

This sequence belongs to the universal ribosomal protein uS19 family.

Protein S19 forms a complex with S13 that binds strongly to the 16S ribosomal RNA. The sequence is that of Small ribosomal subunit protein uS19 from Pseudomonas putida (strain ATCC 700007 / DSM 6899 / JCM 31910 / BCRC 17059 / LMG 24140 / F1).